Here is a 182-residue protein sequence, read N- to C-terminus: Functional amyloid subunit FapB (182 aa).

The signal sequence occupies residues 1–18 (MTHSWLLLTVLGCSAAMA). The stretch at 22–58 (NQALIDNAGKQYTGVLSVNQAAGNQHQQINSRAISLG) is one FapB_R1 repeat. The FapB_R2 repeat unit spans residues 80 to 114 (SAAIQGSAFSNGNGILGVNQSAGANNQMINAVRIS). Residues 150 to 180 (SDQAFTGSRGVVQVNQSAGVGNRMANTLGVT) form a FapB_R3 repeat.

Belongs to the FapB/FapC family. In terms of assembly, forms fibrils in vitro; in the presence of FapA the fibrils are slightly narrower. A minor component of purified amyloid fibrils. Fibrils are resistant to boiling in 2% (weight/vol) SDS and require &gt;90% (vol/vol) formic acid to dissolve.

It localises to the fimbrium. The protein localises to the secreted. A minor component of the functional amyloid in this bacterium. Probably nucleates fibril formation; FapB nucleates fibrillation its own, FapA inhibits FapB fibril elongation. Upon overexpression of the endogenous six-gene locus (fapA-fapF) in situ, cells form large clumps during liquid growth, make large amounts of biofilm and produce amyloid fibrils. Expression of the 6 gene operon in E.coli strain BL21(DE3) induces flocculation and biofilm formation with copious extracellular fibrils. This chain is Functional amyloid subunit FapB, found in Pseudomonas fluorescens.